A 329-amino-acid polypeptide reads, in one-letter code: Malate dehydrogenase (329 aa).

12 to 18 (GAAGQIG) lines the NAD(+) pocket. 2 residues coordinate substrate: R93 and R99. Residues N106, Q113, and 130 to 132 (VGN) each bind NAD(+). N132 and R163 together coordinate substrate. The active-site Proton acceptor is the H188.

Belongs to the LDH/MDH superfamily. MDH type 2 family.

It carries out the reaction (S)-malate + NAD(+) = oxaloacetate + NADH + H(+). In terms of biological role, catalyzes the reversible oxidation of malate to oxaloacetate. The polypeptide is Malate dehydrogenase (Streptomyces griseus subsp. griseus (strain JCM 4626 / CBS 651.72 / NBRC 13350 / KCC S-0626 / ISP 5235)).